The chain runs to 280 residues: Phosphatidylglycerol--prolipoprotein diacylglyceryl transferase (280 aa).

2 consecutive transmembrane segments (helical) span residues 59-79 (FLTW…ILFY) and 97-117 (GGMS…LFTW). Arg142 contributes to the a 1,2-diacyl-sn-glycero-3-phospho-(1'-sn-glycerol) binding site. A run of 2 helical transmembrane segments spans residues 207-227 (GFLA…CECF) and 233-253 (FIGF…PMAI).

It belongs to the Lgt family.

The protein resides in the cell inner membrane. The enzyme catalyses L-cysteinyl-[prolipoprotein] + a 1,2-diacyl-sn-glycero-3-phospho-(1'-sn-glycerol) = an S-1,2-diacyl-sn-glyceryl-L-cysteinyl-[prolipoprotein] + sn-glycerol 1-phosphate + H(+). The protein operates within protein modification; lipoprotein biosynthesis (diacylglyceryl transfer). Functionally, catalyzes the transfer of the diacylglyceryl group from phosphatidylglycerol to the sulfhydryl group of the N-terminal cysteine of a prolipoprotein, the first step in the formation of mature lipoproteins. The sequence is that of Phosphatidylglycerol--prolipoprotein diacylglyceryl transferase from Gluconacetobacter diazotrophicus (strain ATCC 49037 / DSM 5601 / CCUG 37298 / CIP 103539 / LMG 7603 / PAl5).